A 379-amino-acid polypeptide reads, in one-letter code: Sialidase-2 (379 aa).

The short motif at 20-23 (YRIP) is the FRIP motif element. Positions 21 and 41 each coordinate substrate. Catalysis depends on Asp46, which acts as the Proton acceptor. A BNR 1 repeat occupies 127–138 (VSSTDHGRTWSP). Residues Tyr179 and Tyr181 each coordinate substrate. The stretch at 197–208 (FISLDHGHTWKL) is one BNR 2 repeat. Positions 218, 237, and 303 each coordinate substrate. Arg303 is an active-site residue. Tyr333 functions as the Nucleophile in the catalytic mechanism. Glu354 is a catalytic residue.

Belongs to the glycosyl hydrolase 33 family. Highly expressed in heart.

Its subcellular location is the cytoplasm. The protein localises to the cytosol. It carries out the reaction Hydrolysis of alpha-(2-&gt;3)-, alpha-(2-&gt;6)-, alpha-(2-&gt;8)- glycosidic linkages of terminal sialic acid residues in oligosaccharides, glycoproteins, glycolipids, colominic acid and synthetic substrates.. It catalyses the reaction a ganglioside GD1a + H2O = a ganglioside GM1 + N-acetylneuraminate. The enzyme catalyses a ganglioside GM1 + H2O = a ganglioside GA1 + N-acetylneuraminate. The catalysed reaction is a ganglioside GT1b + H2O = a ganglioside GD1b + N-acetylneuraminate. It carries out the reaction a ganglioside GD1b + H2O = a ganglioside GM1 + N-acetylneuraminate. It catalyses the reaction a ganglioside GD3 + H2O = a ganglioside GM3 + N-acetylneuraminate. The enzyme catalyses a ganglioside GM3 + H2O = a beta-D-galactosyl-(1-&gt;4)-beta-D-glucosyl-(1&lt;-&gt;1)-ceramide + N-acetylneuraminate. The catalysed reaction is a ganglioside GM2 + H2O = a ganglioside GA2 + N-acetylneuraminate. It carries out the reaction a neolactoside IV(3)-alpha-NeuAc-nLc4Cer(d18:1(4E)) + H2O = a neolactoside nLc4Cer(d18:1(4E)) + N-acetylneuraminate. It catalyses the reaction N-acetyl-alpha-neuraminosyl-(2-&gt;3)-beta-D-galactosyl-(1-&gt;4)-D-glucose + H2O = lactose + N-acetylneuraminate. Functionally, exo-alpha-sialidase that catalyzes the hydrolytic cleavage of the terminal sialic acid (N-acetylneuraminic acid, Neu5Ac) of a glycan moiety in the catabolism of glycolipids, glycoproteins and oligosacharides. Recognizes sialyl linkage positions of the glycan moiety as well as the supramolecular organization of the sialoglycoconjugate. Displays preference for alpha-(2-&gt;3)-sialylated GD1a and GT1B gangliosides over alpha-(2-&gt;8)-sialylated GD1b, in both monomeric forms and micelles. Hydrolyzes exclusively monomeric GM1 ganglioside, but has no activity toward the miscellar form. Has lower sialidase activity for glycoproteins such as fetuin and TF/transferrin that carry a mixture of alpha-(2-&gt;3) and alpha-(2-&gt;6)-sialyl linkages. Cleaves milk oligosaccharide alpha-(2-&gt;3)-sialyllactose, but is inactive toward isomer alpha-(2-&gt;6)-sialyllactose isomer. Has no activity toward colominic acid, a homomer of alpha-(2-&gt;8)-linked Neu5Ac residues. This chain is Sialidase-2 (Neu2), found in Mus musculus (Mouse).